The sequence spans 88 residues: Sec-independent protein translocase protein TatA (88 aa).

Residues 1–21 (MGGASIWHWIVVGVIVMLLFG) form a helical membrane-spanning segment. Residues 62 to 88 (TEPVRTLPPHPTEPAPATHATVDRKVV) form a disordered region.

Belongs to the TatA/E family. In terms of assembly, the Tat system comprises two distinct complexes: a TatABC complex, containing multiple copies of TatA, TatB and TatC subunits, and a separate TatA complex, containing only TatA subunits. Substrates initially bind to the TatABC complex, which probably triggers association of the separate TatA complex to form the active translocon.

The protein resides in the cell inner membrane. Functionally, part of the twin-arginine translocation (Tat) system that transports large folded proteins containing a characteristic twin-arginine motif in their signal peptide across membranes. TatA could form the protein-conducting channel of the Tat system. This is Sec-independent protein translocase protein TatA from Methylobacterium sp. (strain 4-46).